A 197-amino-acid chain; its full sequence is HTH-type transcriptional regulator BetI (197 aa).

The 61-residue stretch at 8–68 (PIRRQQLIQA…ATMRHLMNAL (61 aa)) folds into the HTH tetR-type domain. Residues 31-50 (SIALIARLAGVSNGIISHYF) constitute a DNA-binding region (H-T-H motif).

The protein operates within amine and polyamine biosynthesis; betaine biosynthesis via choline pathway [regulation]. Repressor involved in the biosynthesis of the osmoprotectant glycine betaine. It represses transcription of the choline transporter BetT and the genes of BetAB involved in the synthesis of glycine betaine. The chain is HTH-type transcriptional regulator BetI from Pseudomonas savastanoi pv. phaseolicola (strain 1448A / Race 6) (Pseudomonas syringae pv. phaseolicola (strain 1448A / Race 6)).